Consider the following 359-residue polypeptide: MSRKILVLPGDGIGPEITREAVKILNACREAGLEASIEEGLVGGAGIDAHGVPLPDETLASAKAADAVLLGAVGGPQWDKIEDLSKRPEKGLLGLRKNLNLFGNLRPALLYPQLASASSLKPEIVAGLDIMIVRELTGGIYFGQPRGIEERDGERVGYNTYIYAEHEIERIGRVAFEMARERGGKLCSVDKANVLEATILWREVMERLAPEYPDVALSHMYVDNAAMQLVRAPKQFDVIVTGNMFGDILSDAAAMLTGSIGMLPSASLNEQRQGMYEPCHGSAPDIAGQGIANPLATILSVAMMLRYSLEAPQLAERIERAVGTVLDQGLRTADIAFEGTAPVSTQAMGDAVLAAFQAQ.

Substrate-binding residues include Arg-96, Arg-106, Arg-134, and Asp-223. The Mg(2+) site is built by Asp-223, Asp-247, and Asp-251. 281–293 is a binding site for NAD(+); that stretch reads GSAPDIAGQGIAN.

It belongs to the isocitrate and isopropylmalate dehydrogenases family. LeuB type 1 subfamily. Homodimer. The cofactor is Mg(2+). Requires Mn(2+) as cofactor.

The protein localises to the cytoplasm. It catalyses the reaction (2R,3S)-3-isopropylmalate + NAD(+) = 4-methyl-2-oxopentanoate + CO2 + NADH. It participates in amino-acid biosynthesis; L-leucine biosynthesis; L-leucine from 3-methyl-2-oxobutanoate: step 3/4. Its function is as follows. Catalyzes the oxidation of 3-carboxy-2-hydroxy-4-methylpentanoate (3-isopropylmalate) to 3-carboxy-4-methyl-2-oxopentanoate. The product decarboxylates to 4-methyl-2 oxopentanoate. In Chromohalobacter salexigens (strain ATCC BAA-138 / DSM 3043 / CIP 106854 / NCIMB 13768 / 1H11), this protein is 3-isopropylmalate dehydrogenase.